A 560-amino-acid polypeptide reads, in one-letter code: Dihydroxy-acid dehydratase (560 aa).

Asp-80 is a binding site for Mg(2+). Cys-121 is a binding site for [2Fe-2S] cluster. Residues Asp-122 and Lys-123 each contribute to the Mg(2+) site. Residue Lys-123 is modified to N6-carboxylysine. Residue Cys-194 participates in [2Fe-2S] cluster binding. Glu-447 is a binding site for Mg(2+). Ser-473 (proton acceptor) is an active-site residue.

Belongs to the IlvD/Edd family. Homodimer. The cofactor is [2Fe-2S] cluster. It depends on Mg(2+) as a cofactor.

The enzyme catalyses (2R)-2,3-dihydroxy-3-methylbutanoate = 3-methyl-2-oxobutanoate + H2O. The catalysed reaction is (2R,3R)-2,3-dihydroxy-3-methylpentanoate = (S)-3-methyl-2-oxopentanoate + H2O. Its pathway is amino-acid biosynthesis; L-isoleucine biosynthesis; L-isoleucine from 2-oxobutanoate: step 3/4. It participates in amino-acid biosynthesis; L-valine biosynthesis; L-valine from pyruvate: step 3/4. Its function is as follows. Functions in the biosynthesis of branched-chain amino acids. Catalyzes the dehydration of (2R,3R)-2,3-dihydroxy-3-methylpentanoate (2,3-dihydroxy-3-methylvalerate) into 2-oxo-3-methylpentanoate (2-oxo-3-methylvalerate) and of (2R)-2,3-dihydroxy-3-methylbutanoate (2,3-dihydroxyisovalerate) into 2-oxo-3-methylbutanoate (2-oxoisovalerate), the penultimate precursor to L-isoleucine and L-valine, respectively. This chain is Dihydroxy-acid dehydratase, found in Chloroherpeton thalassium (strain ATCC 35110 / GB-78).